The sequence spans 501 residues: ATP synthase subunit alpha (501 aa).

169–176 contacts ATP; that stretch reads GDRQTGKT.

The protein belongs to the ATPase alpha/beta chains family. F-type ATPases have 2 components, CF(1) - the catalytic core - and CF(0) - the membrane proton channel. CF(1) has five subunits: alpha(3), beta(3), gamma(1), delta(1), epsilon(1). CF(0) has three main subunits: a(1), b(2) and c(9-12). The alpha and beta chains form an alternating ring which encloses part of the gamma chain. CF(1) is attached to CF(0) by a central stalk formed by the gamma and epsilon chains, while a peripheral stalk is formed by the delta and b chains.

Its subcellular location is the cell membrane. It carries out the reaction ATP + H2O + 4 H(+)(in) = ADP + phosphate + 5 H(+)(out). Functionally, produces ATP from ADP in the presence of a proton gradient across the membrane. The alpha chain is a regulatory subunit. The chain is ATP synthase subunit alpha from Streptococcus uberis (strain ATCC BAA-854 / 0140J).